We begin with the raw amino-acid sequence, 105 residues long: Thioredoxin (105 aa).

Residues 2–105 form the Thioredoxin domain; it reads VKIVGDLTEF…KLEEAIKKYM (104 aa). Catalysis depends on nucleophile residues Cys-32 and Cys-35. Cys-32 and Cys-35 are joined by a disulfide. S-nitrosocysteine is present on residues Cys-69 and Cys-73.

It belongs to the thioredoxin family. Post-translationally, may be nitrosylated on several cysteine residues, depending on the oxidation state. Nitrosylated Cys-73 may serve as donor for nitrosylation of target proteins.

It localises to the nucleus. Its subcellular location is the cytoplasm. The protein resides in the secreted. Participates in various redox reactions through the reversible oxidation of its active center dithiol to a disulfide and catalyzes dithiol-disulfide exchange reactions. Plays a role in the reversible S-nitrosylation of cysteine residues in target proteins, and thereby contributes to the response to intracellular nitric oxide. Nitrosylates the active site Cys of CASP3 in response to nitric oxide (NO), and thereby inhibits caspase-3 activity. Induces the FOS/JUN AP-1 DNA binding activity in ionizing radiation (IR) cells through its oxidation/reduction status and stimulates AP-1 transcriptional activity. The chain is Thioredoxin (TXN) from Ophiophagus hannah (King cobra).